Here is a 548-residue protein sequence, read N- to C-terminus: Chaperonin GroEL (548 aa).

ATP contacts are provided by residues 30–33, lysine 51, 87–91, glycine 415, and aspartate 495; these read TLGP and DGTTT.

The protein belongs to the chaperonin (HSP60) family. In terms of assembly, forms a cylinder of 14 subunits composed of two heptameric rings stacked back-to-back. Interacts with the co-chaperonin GroES.

It localises to the cytoplasm. The catalysed reaction is ATP + H2O + a folded polypeptide = ADP + phosphate + an unfolded polypeptide.. Together with its co-chaperonin GroES, plays an essential role in assisting protein folding. The GroEL-GroES system forms a nano-cage that allows encapsulation of the non-native substrate proteins and provides a physical environment optimized to promote and accelerate protein folding. This chain is Chaperonin GroEL, found in Photorhabdus laumondii subsp. laumondii (strain DSM 15139 / CIP 105565 / TT01) (Photorhabdus luminescens subsp. laumondii).